The chain runs to 142 residues: Putative pre-16S rRNA nuclease (142 aa).

The protein belongs to the YqgF nuclease family.

It is found in the cytoplasm. Its function is as follows. Could be a nuclease involved in processing of the 5'-end of pre-16S rRNA. This Blochmanniella floridana protein is Putative pre-16S rRNA nuclease.